The primary structure comprises 476 residues: Aspartyl/glutamyl-tRNA(Asn/Gln) amidotransferase subunit B (476 aa).

Belongs to the GatB/GatE family. GatB subfamily. As to quaternary structure, heterotrimer of A, B and C subunits.

The enzyme catalyses L-glutamyl-tRNA(Gln) + L-glutamine + ATP + H2O = L-glutaminyl-tRNA(Gln) + L-glutamate + ADP + phosphate + H(+). It catalyses the reaction L-aspartyl-tRNA(Asn) + L-glutamine + ATP + H2O = L-asparaginyl-tRNA(Asn) + L-glutamate + ADP + phosphate + 2 H(+). Functionally, allows the formation of correctly charged Asn-tRNA(Asn) or Gln-tRNA(Gln) through the transamidation of misacylated Asp-tRNA(Asn) or Glu-tRNA(Gln) in organisms which lack either or both of asparaginyl-tRNA or glutaminyl-tRNA synthetases. The reaction takes place in the presence of glutamine and ATP through an activated phospho-Asp-tRNA(Asn) or phospho-Glu-tRNA(Gln). The polypeptide is Aspartyl/glutamyl-tRNA(Asn/Gln) amidotransferase subunit B (Listeria welshimeri serovar 6b (strain ATCC 35897 / DSM 20650 / CCUG 15529 / CIP 8149 / NCTC 11857 / SLCC 5334 / V8)).